Here is an 868-residue protein sequence, read N- to C-terminus: Transcription factor pynR (868 aa).

The zn(2)-C6 fungal-type DNA-binding region spans 11–37; it reads CTFCRTRKIACSGERICNACRSRSIEC. Disordered stretches follow at residues 51–88, 662–683, 715–761, and 829–868; these read NKTT…TSAV, LSGS…LDLS, SGIP…ASDL, and GMGE…GMSN. Composition is skewed to low complexity over residues 663-683 and 715-727; these read SGSR…LDLS and SGIP…SISH.

It localises to the nucleus. Its function is as follows. Transcription factor that regulates the expression of the gene cluster that mediates the biosynthesis of pyranonigrins, a family of antioxidative compounds. This chain is Transcription factor pynR, found in Aspergillus niger (strain ATCC MYA-4892 / CBS 513.88 / FGSC A1513).